We begin with the raw amino-acid sequence, 557 residues long: MNKLRSSAITQGVQRSPNRSMLRAVGFNDEDFNKPIVGVANGYSTITPCNMGLNKLALKAEESIKRSGGMPQMFGTITVSDGISMGTEGMKYSLVSREVIADSIETACNAQSMDGVLAIGGCDKNMPGAMIAIARMNIPSIFIYGGTIKPGKLHGEDLTVVSAFEAVGQLTAGKINEERLIQVEKNCIPGAGSCGGMFTANTMSAVIEVLGLSLPHSSTMAAEDLEKELSADKSAEILVSAIEKDIRPLDLMTKKAFENAISVIMAIGGSTNAVLHILAIANTAGIDININDFERIRQKVPVICDLKPSGKYVTVDLHKAGGIPQVMKILLNAGLIHGDCKNIEGKTISEYLQNIPDKPPTNQNVIRDIDDPLYKKGHLAILKGNLASEGSVAKISGVKNPVLTGPAKIFESEEDCLKSILNNDIKAGDVVVIRNEGPVGGPGMREMLAPTSAIVGQGLGEKVALITDGRFSGGTYGLVVGHIAPEAAVGGNIALIKQGDLITVDAVKQLIEVDLSDEELEKRKKDWVKPIQKYKRGILSKYSRIVSTSSLGAVTDL.

Residue Cys49 participates in [2Fe-2S] cluster binding. Asp81 lines the Mg(2+) pocket. Residue Cys122 coordinates [2Fe-2S] cluster. The Mg(2+) site is built by Asp123 and Lys124. An N6-carboxylysine modification is found at Lys124. Cys194 is a [2Fe-2S] cluster binding site. Glu446 contacts Mg(2+). Ser472 acts as the Proton acceptor in catalysis.

The protein belongs to the IlvD/Edd family. In terms of assembly, homodimer. The cofactor is [2Fe-2S] cluster. Mg(2+) is required as a cofactor.

It carries out the reaction (2R)-2,3-dihydroxy-3-methylbutanoate = 3-methyl-2-oxobutanoate + H2O. It catalyses the reaction (2R,3R)-2,3-dihydroxy-3-methylpentanoate = (S)-3-methyl-2-oxopentanoate + H2O. Its pathway is amino-acid biosynthesis; L-isoleucine biosynthesis; L-isoleucine from 2-oxobutanoate: step 3/4. The protein operates within amino-acid biosynthesis; L-valine biosynthesis; L-valine from pyruvate: step 3/4. Its function is as follows. Functions in the biosynthesis of branched-chain amino acids. Catalyzes the dehydration of (2R,3R)-2,3-dihydroxy-3-methylpentanoate (2,3-dihydroxy-3-methylvalerate) into 2-oxo-3-methylpentanoate (2-oxo-3-methylvalerate) and of (2R)-2,3-dihydroxy-3-methylbutanoate (2,3-dihydroxyisovalerate) into 2-oxo-3-methylbutanoate (2-oxoisovalerate), the penultimate precursor to L-isoleucine and L-valine, respectively. The protein is Dihydroxy-acid dehydratase of Prochlorococcus marinus (strain MIT 9312).